Here is a 312-residue protein sequence, read N- to C-terminus: NADPH-dependent alpha-keto amide reductase (312 aa).

Residues G25, T26, R27, and D59 each coordinate NADPH. Catalysis depends on proton donor residues Y64 and H122. S123 bears the Phosphoserine mark. The NADPH site is built by S157, Q179, S208, L210, T257, T258, S259, S260, K261, and R264.

The protein belongs to the aldo/keto reductase family. In terms of assembly, monomer. The N-terminus is blocked.

It is found in the cytoplasm. The protein localises to the nucleus. Functionally, reduces aromatic alpha-keto amides, aliphatic and aromatic alpha-keto esters, but not beta-keto esters. The protein is NADPH-dependent alpha-keto amide reductase of Saccharomyces cerevisiae (strain ATCC 204508 / S288c) (Baker's yeast).